The following is a 227-amino-acid chain: Phosphoribosylformylglycinamidine synthase subunit PurQ (227 aa).

The 223-residue stretch at 3–225 (FAVIVFPGSN…LKYWRETYVV (223 aa)) folds into the Glutamine amidotransferase type-1 domain. Residue cysteine 86 is the Nucleophile of the active site. Residues histidine 194 and glutamate 196 contribute to the active site.

As to quaternary structure, part of the FGAM synthase complex composed of 1 PurL, 1 PurQ and 2 PurS subunits.

The protein resides in the cytoplasm. The enzyme catalyses N(2)-formyl-N(1)-(5-phospho-beta-D-ribosyl)glycinamide + L-glutamine + ATP + H2O = 2-formamido-N(1)-(5-O-phospho-beta-D-ribosyl)acetamidine + L-glutamate + ADP + phosphate + H(+). The catalysed reaction is L-glutamine + H2O = L-glutamate + NH4(+). The protein operates within purine metabolism; IMP biosynthesis via de novo pathway; 5-amino-1-(5-phospho-D-ribosyl)imidazole from N(2)-formyl-N(1)-(5-phospho-D-ribosyl)glycinamide: step 1/2. Its function is as follows. Part of the phosphoribosylformylglycinamidine synthase complex involved in the purines biosynthetic pathway. Catalyzes the ATP-dependent conversion of formylglycinamide ribonucleotide (FGAR) and glutamine to yield formylglycinamidine ribonucleotide (FGAM) and glutamate. The FGAM synthase complex is composed of three subunits. PurQ produces an ammonia molecule by converting glutamine to glutamate. PurL transfers the ammonia molecule to FGAR to form FGAM in an ATP-dependent manner. PurS interacts with PurQ and PurL and is thought to assist in the transfer of the ammonia molecule from PurQ to PurL. This chain is Phosphoribosylformylglycinamidine synthase subunit PurQ, found in Bacillus cytotoxicus (strain DSM 22905 / CIP 110041 / 391-98 / NVH 391-98).